The primary structure comprises 238 residues: 7-carboxy-7-deazaguanine synthase (238 aa).

Substrate-binding positions include 14–16 (IQG) and Arg29. A Radical SAM core domain is found at 20 to 234 (VVGQKTMFIR…PQLHALVWGN (215 aa)). Residues Cys33, Cys37, and Cys40 each contribute to the [4Fe-4S] cluster site. Ser42 lines the Mg(2+) pocket. Substrate is bound at residue Ser80. Residues Gly82 and 126 to 128 (SPK) each bind S-adenosyl-L-methionine.

Belongs to the radical SAM superfamily. 7-carboxy-7-deazaguanine synthase family. In terms of assembly, homodimer. Requires [4Fe-4S] cluster as cofactor. It depends on S-adenosyl-L-methionine as a cofactor. The cofactor is Mg(2+).

It carries out the reaction 6-carboxy-5,6,7,8-tetrahydropterin + H(+) = 7-carboxy-7-deazaguanine + NH4(+). Its pathway is purine metabolism; 7-cyano-7-deazaguanine biosynthesis. In terms of biological role, catalyzes the complex heterocyclic radical-mediated conversion of 6-carboxy-5,6,7,8-tetrahydropterin (CPH4) to 7-carboxy-7-deazaguanine (CDG), a step common to the biosynthetic pathways of all 7-deazapurine-containing compounds. The polypeptide is 7-carboxy-7-deazaguanine synthase (Bacillus cereus (strain ATCC 14579 / DSM 31 / CCUG 7414 / JCM 2152 / NBRC 15305 / NCIMB 9373 / NCTC 2599 / NRRL B-3711)).